A 151-amino-acid chain; its full sequence is Centrin-A (151 aa).

2 consecutive EF-hand domains span residues 80–115 (DVYA…LGEA) and 116–151 (RSDS…KKIY). Ca(2+)-binding residues include D93, D95, S97, Y99, D104, D129, N131, D133, K135, and E140.

This sequence belongs to the centrin family.

The protein resides in the cytoplasm. Its subcellular location is the cytoskeleton. It localises to the microtubule organizing center. It is found in the centrosome. The protein localises to the nucleus. Functionally, plays a fundamental role in microtubule-organizing center structure and function. This is Centrin-A (cenA) from Dictyostelium discoideum (Social amoeba).